Consider the following 372-residue polypeptide: Phospho-2-dehydro-3-deoxyheptonate aldolase, tyrosine-inhibited (372 aa).

The protein belongs to the class-I DAHP synthase family.

It localises to the cytoplasm. It is found in the nucleus. It catalyses the reaction D-erythrose 4-phosphate + phosphoenolpyruvate + H2O = 7-phospho-2-dehydro-3-deoxy-D-arabino-heptonate + phosphate. It functions in the pathway metabolic intermediate biosynthesis; chorismate biosynthesis; chorismate from D-erythrose 4-phosphate and phosphoenolpyruvate: step 1/7. In terms of biological role, stereospecific condensation of phosphoenolpyruvate (PEP) and D-erythrose-4-phosphate (E4P) giving rise to 3-deoxy-D-arabino-heptulosonate-7-phosphate (DAHP). The protein is Phospho-2-dehydro-3-deoxyheptonate aldolase, tyrosine-inhibited (aro4) of Schizosaccharomyces pombe (strain 972 / ATCC 24843) (Fission yeast).